Reading from the N-terminus, the 297-residue chain is NAC domain-containing protein 72 (297 aa).

Residues 14–162 (LPPGFRFYPT…DWVLCRIYKK (149 aa)) form the NAC domain. Residues 111 to 168 (VGIKKALVFYAGKAPKGTKTNWIMHEYRLIEHSRSHGSSKLDDWVLCRIYKKTSGSQR) mediate DNA binding. Disordered stretches follow at residues 168-195 (RQAV…SQLD) and 259-278 (GEAE…LTQS). Residues 266 to 277 (VNRQQNSSGLTQ) are compositionally biased toward polar residues.

As to expression, expressed in leaves and in root pericycle and epidermis.

It is found in the nucleus. In terms of biological role, transcription factors that bind specifically to the 5'-CATGTG-3' motif and with bipartite regions with 5'-CGTr-3' and 5'-YACG-3' as cores. Involved in the regulation of metabolic reprogramming during senescence by promoting the chloroplast protein degradation and the catabolism of lysine, phytol and free fatty acids via the induction of CV, LKR/SDH and PES1 expression. Also triggers the degradation of starch and the accumulation of mono- and disaccharides during senescence by enhancing the expression of AMY1, SFP1 and SWEET15. This chain is NAC domain-containing protein 72, found in Arabidopsis thaliana (Mouse-ear cress).